Consider the following 1025-residue polypeptide: Leucyl-cystinyl aminopeptidase (1025 aa).

Met1 is modified (N-acetylmethionine). The Cytoplasmic portion of the chain corresponds to 1-109; it reads METFTNDRLQ…DGTCSVPSAR (109 aa). The Dileucine internalization motif motif lies at 53-54; it reads LL. Tyr70 carries the phosphotyrosine modification. The Dileucine internalization motif motif lies at 76–77; it reads LL. Phosphoserine; by PKC/PRKCZ; in vitro occurs at positions 80 and 91. Positions 96–101 are tankyrase binding; the sequence is RQSPDG. The chain crosses the membrane as a helical; Signal-anchor for type II membrane protein span at residues 110–131; it reads TLVICVFVIVVAVSVIMVIYLL. Topologically, residues 132–1025 are extracellular; sequence PRCTFTKEGC…RNLKTLTLWL (894 aa). Residues Asn145, Asn184, Asn215, Asn256, and Asn266 are each glycosylated (N-linked (GlcNAc...) asparagine). Residue Glu295 coordinates substrate. N-linked (GlcNAc...) asparagine glycosylation is found at Asn368 and Asn374. 428-432 provides a ligand contact to substrate; that stretch reads GAMEN. Asn447 carries an N-linked (GlcNAc...) asparagine glycan. His464 contacts Zn(2+). The Proton acceptor role is filled by Glu465. Zn(2+)-binding residues include His468 and Glu487. Asn525, Asn578, Asn664, Asn682, Asn695, Asn758, Asn834, Asn850, and Asn989 each carry an N-linked (GlcNAc...) asparagine glycan.

Belongs to the peptidase M1 family. In terms of assembly, homodimer. Binds tankyrases 1 and 2. Requires Zn(2+) as cofactor. N-glycosylated. Highly expressed in heart, brain, spleen, lung, kidney and white adipose tissue. Detected at lower levels in skeletal muscle and liver.

The protein resides in the cell membrane. It is found in the endomembrane system. The catalysed reaction is Release of an N-terminal amino acid, Cys-|-Xaa-, in which the half-cystine residue is involved in a disulfide loop, notably in oxytocin or vasopressin. Hydrolysis rates on a range of aminoacyl arylamides exceed that for the cystinyl derivative, however.. Its function is as follows. Release of an N-terminal amino acid, cleave before cysteine, leucine as well as other amino acids. Degrades peptide hormones such as oxytocin, vasopressin and angiotensin III, and plays a role in maintaining homeostasis during pregnancy. May be involved in the inactivation of neuronal peptides in the brain. Cleaves Met-enkephalin and dynorphin. Binds angiotensin IV and may be the angiotensin IV receptor in the brain. The chain is Leucyl-cystinyl aminopeptidase (Lnpep) from Rattus norvegicus (Rat).